A 310-amino-acid polypeptide reads, in one-letter code: UDP-N-acetylenolpyruvoylglucosamine reductase (310 aa).

The FAD-binding PCMH-type domain occupies 30–200 (RVGGPAQWLA…VAAEFQLEPG (171 aa)). R179 is a catalytic residue. S230 serves as the catalytic Proton donor. E300 is a catalytic residue.

The protein belongs to the MurB family. FAD is required as a cofactor.

Its subcellular location is the cytoplasm. The catalysed reaction is UDP-N-acetyl-alpha-D-muramate + NADP(+) = UDP-N-acetyl-3-O-(1-carboxyvinyl)-alpha-D-glucosamine + NADPH + H(+). It functions in the pathway cell wall biogenesis; peptidoglycan biosynthesis. Functionally, cell wall formation. This is UDP-N-acetylenolpyruvoylglucosamine reductase from Synechococcus sp. (strain WH7803).